Reading from the N-terminus, the 448-residue chain is tRNA wybutosine-synthesizing protein 2 homolog (448 aa).

S-adenosyl-L-methionine is bound by residues S218, K225, E265, and 293–294 (DN).

Belongs to the class I-like SAM-binding methyltransferase superfamily. TRM5/TYW2 family.

It carries out the reaction 4-demethylwyosine(37) in tRNA(Phe) + S-adenosyl-L-methionine = 4-demethyl-7-[(3S)-3-amino-3-carboxypropyl]wyosine(37) in tRNA(Phe) + S-methyl-5'-thioadenosine + H(+). It functions in the pathway tRNA modification; wybutosine-tRNA(Phe) biosynthesis. Functionally, S-adenosyl-L-methionine-dependent transferase that acts as a component of the wybutosine biosynthesis pathway. Wybutosine is a hyper modified guanosine with a tricyclic base found at the 3'-position adjacent to the anticodon of eukaryotic phenylalanine tRNA. Catalyzes the transfer of the alpha-amino-alpha-carboxypropyl (acp) group from S-adenosyl-L-methionine to the C-7 position of 4-demethylwyosine (imG-14) to produce wybutosine-86. This chain is tRNA wybutosine-synthesizing protein 2 homolog (TRMT12), found in Homo sapiens (Human).